The sequence spans 312 residues: Taste receptor type 2 member 140 (312 aa).

The Extracellular segment spans residues 1-9 (MKVTVECAL). The chain crosses the membrane as a helical span at residues 10–30 (LITLIVEIIIGCLGNGFIAVV). The Cytoplasmic segment spans residues 31-46 (NIMDWTKRRRFSLVDQ). Residues 47–67 (ILTALAISRLAFVWSLLTVLV) traverse the membrane as a helical segment. Residues 68 to 87 (ISELHSSLLITRKMLRIINN) lie on the Extracellular side of the membrane. The helical transmembrane segment at 88-108 (FWTVTNHFSIWLATCLSIFYF) threads the bilayer. Residues 109–133 (LKIANFSNSIFLSLRWRVKTVVSLT) are Cytoplasmic-facing. A helical membrane pass occupies residues 134–154 (LLVSLLLLLVNVIIINTCIVI). Residues 155–185 (SVEGYKVNMSYSSHFNNNPQISRIPLFTNTM) are Extracellular-facing. Residue Asn-162 is glycosylated (N-linked (GlcNAc...) asparagine). Residues 186 to 206 (FTFIPFTVTLTIFLLLIFSLW) traverse the membrane as a helical segment. Topologically, residues 207-229 (RHLKKMQHRAKGPRDPSTTAHIK) are cytoplasmic. A helical transmembrane segment spans residues 230 to 250 (ALQMVVTFLFLYTIFFLALVM). At 251 to 264 (QAWNNEIQSKTVFN) the chain is on the extracellular side. Residues 265–285 (LVFESIALAFPSGHSCVLILG) form a helical membrane-spanning segment. At 286–312 (NSKLRQAFLTIIWWLRSSFNAAELSSP) the chain is on the cytoplasmic side.

This sequence belongs to the G-protein coupled receptor T2R family.

It localises to the membrane. Its function is as follows. Putative taste receptor which may play a role in the perception of bitterness. The sequence is that of Taste receptor type 2 member 140 from Rattus norvegicus (Rat).